A 319-amino-acid polypeptide reads, in one-letter code: MTILAWCIAWVLDFIIGDPQHWPHPVRWIGRLITFVQHIVRRYCHSDKALRIGGGVMWIVVVGATWGMAWGVLALAQRIHPWLGWSVEVWMIFTVLAGRSLARAAQDVERPLRENDLAESRIKLSWIVGRDTSQLQPEQINRAVVETVAENTVDGIIAPLFFLFLGGAPLAMAYKAVNTLDSMVGYKHEKYRAIGMVSARMDDVANYLPARLSWLLLGIAAGLCRLSGWRALRIGWRDRYNHSSPNCAWSEACVAGALGIQLGGPNNYFGERVDKPWIGDAQRDISVDDISRTIRLMWGASTLALALFIAARCWLSGVA.

5 consecutive transmembrane segments (helical) span residues 56-76 (VMWIVVVGATWGMAWGVLALA), 82-102 (WLGWSVEVWMIFTVLAGRSLA), 153-173 (VDGIIAPLFFLFLGGAPLAMA), 204-224 (VANYLPARLSWLLLGIAAGLC), and 296-316 (LMWGASTLALALFIAARCWLS).

It belongs to the CobD/CbiB family.

The protein resides in the cell membrane. The protein operates within cofactor biosynthesis; adenosylcobalamin biosynthesis. Functionally, converts cobyric acid to cobinamide by the addition of aminopropanol on the F carboxylic group. However, the true cosubstrate could be (R)-1-amino-2-propanol O-2-phosphate, leading to cobinamide phosphate. The chain is Cobalamin biosynthesis protein CbiB from Salmonella arizonae (strain ATCC BAA-731 / CDC346-86 / RSK2980).